We begin with the raw amino-acid sequence, 88 residues long: UPF0297 protein Ccel_2240 (88 aa).

Belongs to the UPF0297 family.

The protein is UPF0297 protein Ccel_2240 of Ruminiclostridium cellulolyticum (strain ATCC 35319 / DSM 5812 / JCM 6584 / H10) (Clostridium cellulolyticum).